The following is a 479-amino-acid chain: FAD-dependent monooxygenase ausM (479 aa).

Residues Glu40, Gly54, and Arg113 each contribute to the FAD site. Tyr224 is a catalytic residue. A glycan (N-linked (GlcNAc...) asparagine) is linked at Asn289. FAD contacts are provided by Asp316 and Ala329. A helical transmembrane segment spans residues 449–469 (TLPWLVISLPVLASMLCYLVY).

This sequence belongs to the paxM FAD-dependent monooxygenase family. It depends on FAD as a cofactor.

Its subcellular location is the membrane. The protein operates within secondary metabolite biosynthesis; terpenoid biosynthesis. Functionally, FAD-dependent monooxygenase; part of the gene cluster B that mediates the biosynthesis of austinol and dehydroaustinol, two fungal meroterpenoids. The first step of the pathway is the synthesis of 3,5-dimethylorsellinic acid by the polyketide synthase ausA. 3,5-dimethylorsellinic acid is then prenylated by the polyprenyl transferase ausN. Further epoxidation by the FAD-dependent monooxygenase ausM and cyclization by the probable terpene cyclase ausL lead to the formation of protoaustinoid A. Protoaustinoid A is then oxidized to spiro-lactone preaustinoid A3 by the combined action of the FAD-binding monooxygenases ausB and ausC, and the dioxygenase ausE. Acid-catalyzed keto-rearrangement and ring contraction of the tetraketide portion of preaustinoid A3 by ausJ lead to the formation of preaustinoid A4. The aldo-keto reductase ausK, with the help of ausH, is involved in the next step by transforming preaustinoid A4 into isoaustinone which is in turn hydroxylated by the P450 monooxygenase ausI to form austinolide. Finally, the cytochrome P450 monooxygenase ausG modifies austinolide to austinol. Austinol can be further modified to dehydroaustinol which forms a diffusible complex with diorcinol that initiates conidiation. Due to genetic rearrangements of the clusters and the subsequent loss of some enzymes, the end products of the Emericella nidulans austinoid biosynthesis clusters are austinol and dehydroaustinol, even if additional enzymes, such as the O-acetyltransferase ausQ and the cytochrome P450 monooxygenase ausR are still functional. In Emericella nidulans (strain FGSC A4 / ATCC 38163 / CBS 112.46 / NRRL 194 / M139) (Aspergillus nidulans), this protein is FAD-dependent monooxygenase ausM.